Reading from the N-terminus, the 476-residue chain is Glycogen synthase (476 aa).

Residue Lys15 coordinates ADP-alpha-D-glucose.

It belongs to the glycosyltransferase 1 family. Bacterial/plant glycogen synthase subfamily.

The catalysed reaction is [(1-&gt;4)-alpha-D-glucosyl](n) + ADP-alpha-D-glucose = [(1-&gt;4)-alpha-D-glucosyl](n+1) + ADP + H(+). Its pathway is glycan biosynthesis; glycogen biosynthesis. Synthesizes alpha-1,4-glucan chains using ADP-glucose. This Streptococcus mutans serotype c (strain ATCC 700610 / UA159) protein is Glycogen synthase.